The sequence spans 469 residues: MAKTLYDKLWDDHVVHTEEDGTTVLYIDRQLLHEVTSPQAFEGLKLANRPVWRISANLAVSDHNVPTTDRSHGIADPVSKLQVDTLDANCDSFGITQFKMTDKRQGIVHVIGPEQGATLPGMTVVCGDSHTSTHGAFGALAHGIGTSEVEHVLATQTLLAKKSKNMLVKVEGTLPRGCTAKDIVLAIIGKIGTAGGTGYAMEFGGSAIRALSMEGRMTVCNMAIEAGARAGMVGVDDITLEYIKGRPFAPQGVEWEQAVAYWRSLHSDEGARFDHVVELRAEEIRPQVSWGTSPEMVVSIEDRVPDPDKEKDPVKRNAMERALEYMALQPNVAIGDIRIDKVFIGSCTNSRIEDMRAAAWVVQKLGKRIASNVKLAMVVPGSGLVKEQAEREGLDKIFKAAGFEWREPGCSMCLAMNADRLEPGERCASTSNRNFEGRQGAGGRTHLVSPAMAAAAALEGHFVDVRKLG.

Cys-347, Cys-410, and Cys-413 together coordinate [4Fe-4S] cluster.

The protein belongs to the aconitase/IPM isomerase family. LeuC type 1 subfamily. As to quaternary structure, heterodimer of LeuC and LeuD. It depends on [4Fe-4S] cluster as a cofactor.

It carries out the reaction (2R,3S)-3-isopropylmalate = (2S)-2-isopropylmalate. It functions in the pathway amino-acid biosynthesis; L-leucine biosynthesis; L-leucine from 3-methyl-2-oxobutanoate: step 2/4. Catalyzes the isomerization between 2-isopropylmalate and 3-isopropylmalate, via the formation of 2-isopropylmaleate. This is 3-isopropylmalate dehydratase large subunit from Ralstonia nicotianae (strain ATCC BAA-1114 / GMI1000) (Ralstonia solanacearum).